We begin with the raw amino-acid sequence, 211 residues long: Glycerol-3-phosphate acyltransferase (211 aa).

5 consecutive transmembrane segments (helical) span residues 5–25 (VILG…TGYL), 55–75 (GPGL…ILVA), 85–105 (PVPA…AVLA), 126–146 (VLLA…LVVL), and 168–188 (WFFT…AFVI).

Belongs to the PlsY family. In terms of assembly, probably interacts with PlsX.

It is found in the cell inner membrane. The enzyme catalyses an acyl phosphate + sn-glycerol 3-phosphate = a 1-acyl-sn-glycero-3-phosphate + phosphate. Its pathway is lipid metabolism; phospholipid metabolism. Functionally, catalyzes the transfer of an acyl group from acyl-phosphate (acyl-PO(4)) to glycerol-3-phosphate (G3P) to form lysophosphatidic acid (LPA). This enzyme utilizes acyl-phosphate as fatty acyl donor, but not acyl-CoA or acyl-ACP. The chain is Glycerol-3-phosphate acyltransferase from Thermosynechococcus vestitus (strain NIES-2133 / IAM M-273 / BP-1).